A 422-amino-acid polypeptide reads, in one-letter code: Replication factor C large subunit (422 aa).

G63–T70 contacts ATP.

The protein belongs to the activator 1 small subunits family. RfcL subfamily. As to quaternary structure, heteromultimer composed of small subunits (RfcS) and large subunits (RfcL).

In terms of biological role, part of the RFC clamp loader complex which loads the PCNA sliding clamp onto DNA. The chain is Replication factor C large subunit from Pyrobaculum neutrophilum (strain DSM 2338 / JCM 9278 / NBRC 100436 / V24Sta) (Thermoproteus neutrophilus).